We begin with the raw amino-acid sequence, 42 residues long: GTPCYCGKTIGIYWFGTKTCPSNRGYTGSCGYFLGICCYPVD.

Disulfide bonds link cysteine 4-cysteine 37, cysteine 6-cysteine 30, and cysteine 20-cysteine 38.

Belongs to the sea anemone type 3 (BDS) potassium channel toxin family.

The protein localises to the secreted. Its subcellular location is the nematocyst. Its function is as follows. Binds to voltage-gated sodium channels (Nav), and slows down the inactivation of mammalian Nav1.2/SCN2A, Nav1.3/SCN3A Nav1.4/SCN4A, Nav1.6/SCN8A, insect DmNav1 and BgNav1 channels, and arachnid VdNav1 channel. This toxin acts by binding to site 3 of sodium channels. This is Delta-actitoxin-Ael2d from Anthopleura elegantissima (Green aggregating anemone).